Consider the following 252-residue polypeptide: Triosephosphate isomerase (252 aa).

11 to 13 is a substrate binding site; it reads NWK. Residue histidine 97 is the Electrophile of the active site. Glutamate 169 functions as the Proton acceptor in the catalytic mechanism. Substrate is bound by residues glycine 175, serine 215, and 236–237; that span reads GG.

This sequence belongs to the triosephosphate isomerase family. As to quaternary structure, homodimer.

The protein localises to the cytoplasm. The catalysed reaction is D-glyceraldehyde 3-phosphate = dihydroxyacetone phosphate. It functions in the pathway carbohydrate biosynthesis; gluconeogenesis. The protein operates within carbohydrate degradation; glycolysis; D-glyceraldehyde 3-phosphate from glycerone phosphate: step 1/1. Involved in the gluconeogenesis. Catalyzes stereospecifically the conversion of dihydroxyacetone phosphate (DHAP) to D-glyceraldehyde-3-phosphate (G3P). The chain is Triosephosphate isomerase from Mycoplasmoides gallisepticum (strain R(low / passage 15 / clone 2)) (Mycoplasma gallisepticum).